A 199-amino-acid polypeptide reads, in one-letter code: Recombination protein RecR (199 aa).

The C4-type zinc-finger motif lies at 57–72; the sequence is CSICGNFTDRDPCRLC. The Toprim domain occupies 80–175; that stretch reads SCICVVEEAR…KVTRLAYGLP (96 aa).

The protein belongs to the RecR family.

May play a role in DNA repair. It seems to be involved in an RecBC-independent recombinational process of DNA repair. It may act with RecF and RecO. The sequence is that of Recombination protein RecR from Moorella thermoacetica (strain ATCC 39073 / JCM 9320).